We begin with the raw amino-acid sequence, 620 residues long: Apoptosis regulator MC163R (620 aa).

A helical transmembrane segment spans residues 113–133; that stretch reads APLPLLLLPLLLPPMILLFFL.

The protein localises to the host mitochondrion. The protein resides in the host membrane. Its function is as follows. Plays a role in the inhibition of host apoptosis. Prevents host TNF-alpha-induced mitochondrial membrane permeabilization and reduces caspase-3/CASP3 and PARP1 cleavage induced by the intrinsic apoptotic pathway. This is Apoptosis regulator MC163R (MC163R) from Homo sapiens (Human).